Here is a 162-residue protein sequence, read N- to C-terminus: CASP-like protein BLE3 (162 aa).

Residues 1-7 (MAKVHRL) lie on the Cytoplasmic side of the membrane. The chain crosses the membrane as a helical span at residues 8 to 28 (MNAVLRLAAAAAAATAAVVMV). Over 29–50 (TSRETTSFFGIQMEAKYSYTPS) the chain is Extracellular. A helical transmembrane segment spans residues 51–71 (FIFFVVAYAVAAAYSLLVLAV). At 72-85 (PAGSALSRLALTTD) the chain is on the cytoplasmic side. The chain crosses the membrane as a helical span at residues 86 to 106 (VVLGMVLAGAVASAGAISDIA). At 107–128 (KNGNSHAGWLPVCGQIHAYCNH) the chain is on the extracellular side. Residues 129-149 (VMAALIAGFVALAVHFVVVMY) form a helical membrane-spanning segment. The Cytoplasmic portion of the chain corresponds to 150-162 (SLHIVTDVICPCH).

Belongs to the Casparian strip membrane proteins (CASP) family. In terms of assembly, homodimer and heterodimers.

It localises to the cell membrane. Functionally, involved in cell elongation in rice through dual regulation by brassinolide and auxin. This chain is CASP-like protein BLE3 (BLE3), found in Oryza sativa subsp. indica (Rice).